The sequence spans 160 residues: MPALILPLIEAAVHWPVRGALLGLDLGTKTIGVAASDPDRKLATGVETIARKAFTADAARLLALAAERTACGFVLGLPLNMDGSEGPRAQSTRAFARNLSRLTELPIGLWDERLSTAAVERELIANDVSRAKRAKVIDEHAAIFILQGALDRLAALRRAE.

The protein belongs to the YqgF nuclease family.

The protein localises to the cytoplasm. Functionally, could be a nuclease involved in processing of the 5'-end of pre-16S rRNA. The polypeptide is Putative pre-16S rRNA nuclease (Rhodopseudomonas palustris (strain ATCC BAA-98 / CGA009)).